A 242-amino-acid chain; its full sequence is Probable transcriptional regulatory protein Bcen2424_2294 (242 aa).

The protein belongs to the TACO1 family.

The protein resides in the cytoplasm. The polypeptide is Probable transcriptional regulatory protein Bcen2424_2294 (Burkholderia cenocepacia (strain HI2424)).